A 189-amino-acid chain; its full sequence is Molybdenum cofactor guanylyltransferase (189 aa).

GTP is bound by residues 10 to 12 (LAG), lysine 23, asparagine 51, aspartate 69, and aspartate 99. A Mg(2+)-binding site is contributed by aspartate 99.

It belongs to the MobA family. As to quaternary structure, monomer. Mg(2+) is required as a cofactor.

It localises to the cytoplasm. It carries out the reaction Mo-molybdopterin + GTP + H(+) = Mo-molybdopterin guanine dinucleotide + diphosphate. Its function is as follows. Transfers a GMP moiety from GTP to Mo-molybdopterin (Mo-MPT) cofactor (Moco or molybdenum cofactor) to form Mo-molybdopterin guanine dinucleotide (Mo-MGD) cofactor. This chain is Molybdenum cofactor guanylyltransferase, found in Pasteurella multocida (strain Pm70).